The following is a 632-amino-acid chain: Palmitoyltransferase ZDHHC17 (632 aa).

The Cytoplasmic portion of the chain corresponds to 1-304; sequence MQREEGFNTK…LKADKEFRQK (304 aa). Positions 11 to 305 are necessary and sufficient for interaction with DNAJC5 and SNAP25; it reads MADGPDEYET…KADKEFRQKV (295 aa). 7 ANK repeats span residues 51–86, 89–118, 123–152, 156–185, 189–219, 224–253, and 257–286; these read THIDDYSTWDIVKATQYGIYERCRELVEAGYDVRQP, ENVTLLHWAAINNRIDLVKYYISKGAIVDQ, LNSTPLHWATRQGHLSMVVQLMKYGADPSL, EGCSCIHLAAQFGHTSIVAYLIAKGQDVDM, NGMTPLMWAAYRTHSVDPTRLLLTFNVSVNL, HKNTALHWAVLAGNTTVISLLLEAGGNVDA, and KGESALDLAKQRKNVWMINHLQEARQAKGY. The next 2 helical transmembrane spans lie at 305-325 and 326-346; these read VMLGTPFLVIWLVGFIADLDI and DSWLIKGLMYGGVWATVQFLS. Topologically, residues 347-357 are cytoplasmic; it reads KSFFDHSMHSA. The chain crosses the membrane as a helical span at residues 358-378; sequence LPLGIYLATKFWMYVTWFFWF. Residues 379 to 381 lie on the Lumenal side of the membrane; sequence WND. A helical membrane pass occupies residues 382–402; that stretch reads LNFLFIHLPFLANSVALFYNF. The Cytoplasmic portion of the chain corresponds to 403-480; the sequence is GKSWKSDPGI…GNCVGAGNHR (78 aa). The region spanning 437-487 is the DHHC domain; it reads IFCSTCLIRKPVRSKHCGVCNRCIAKFDHHCPWVGNCVGAGNHRYFMGYLF. The active-site S-palmitoyl cysteine intermediate is C467. A helical membrane pass occupies residues 481-501; the sequence is YFMGYLFFLLFMICWMIYGCV. The Lumenal portion of the chain corresponds to 502–529; sequence SYWGLHCETTYTKDGFWTYITQIATCSP. A helical membrane pass occupies residues 530-550; that stretch reads WMFWMFLNSVFHFLWVAVLLM. The Cytoplasmic portion of the chain corresponds to 551 to 632; it reads CQLYQITCLG…QISGSGYQLV (82 aa).

It belongs to the DHHC palmitoyltransferase family. AKR/ZDHHC17 subfamily. As to quaternary structure, interacts (via ANK repeats) with numerous proteins (via the consensus sequence motif [VIAP]-[VIT]-x-x-Q-P). Interacts (via ANK repeats) with CLIP3. Interacts (via ANK repeats) with HTT. Interacts (via ANK repeats) with DNAJC5 (via C-terminus). Interacts (via ANK repeats) with MAP6. Interacts (via ANK repeats) with SNAP23. Interacts (via ANK repeats) with SNAP25. Interacts (via ANK repeats) with EVL. Interacts with SPRED1 and SPRED3. Interacts with GPM6A and OPTN. May interact (via ANK repeats) with SPRED2. May interact with NTRK1; may regulate its localization and function. In terms of processing, autopalmitoylated. Autopalmitoylation has a regulatory role in ZDHHC17-mediated Mg(2+) transport. As to expression, expressed in liver, testis, kidney, heart, pancreas and brain. Highest expression was seen in the brain. Localized predominantly in the perinuclear regions of neurons from the cortex, striatum and hippocampus. Colocalized with HTT in the medium spiny neurons of the striatum and the spiny neurons that project into the globus pallidus.

The protein resides in the golgi apparatus membrane. Its subcellular location is the cytoplasmic vesicle membrane. It localises to the presynaptic cell membrane. It catalyses the reaction L-cysteinyl-[protein] + hexadecanoyl-CoA = S-hexadecanoyl-L-cysteinyl-[protein] + CoA. The enzyme catalyses L-cysteinyl-[protein] + tetradecanoyl-CoA = S-tetradecanoyl-L-cysteinyl-[protein] + CoA. It carries out the reaction L-cysteinyl-[protein] + octadecanoyl-CoA = S-octadecanoyl-L-cysteinyl-[protein] + CoA. In terms of biological role, palmitoyltransferase that catalyzes the addition of palmitate onto various protein substrates and is involved in a variety of cellular processes. Has no stringent fatty acid selectivity and in addition to palmitate can also transfer onto target proteins myristate from tetradecanoyl-CoA and stearate from octadecanoyl-CoA. Palmitoyltransferase specific for a subset of neuronal proteins, including SNAP25, DLG4/PSD95, GAD2, SYT1 and HTT. Also palmitoylates neuronal protein GPM6A as well as SPRED1 and SPRED3. Could also play a role in axonogenesis through the regulation of NTRK1 and the downstream ERK1/ERK2 signaling cascade. May be involved in the sorting or targeting of critical proteins involved in the initiating events of endocytosis at the plasma membrane. May play a role in Mg(2+) transport. Could also palmitoylate DNAJC5 and regulate its localization to the Golgi membrane. Palmitoylates CASP6, thereby preventing its dimerization and subsequent activation. The polypeptide is Palmitoyltransferase ZDHHC17 (Mus musculus (Mouse)).